Here is a 782-residue protein sequence, read N- to C-terminus: E3 ubiquitin-protein ligase SopA (782 aa).

Residues 136 to 171 (GVSVSANNRPTVSEGRTPPVSPSLSLQATSSPSSPA) are disordered. The span at 157 to 171 (PSLSLQATSSPSSPA) shows a compositional bias: low complexity. The Glycyl thioester intermediate role is filled by C753.

The protein belongs to the SopA E3 ligase family. Post-translationally, ubiquitinated in the presence of host E1 ubiquitin-activating enzyme, E2 ubiquitin-conjugating enzyme and ubiquitin.

The protein localises to the secreted. It localises to the host cell. The enzyme catalyses S-ubiquitinyl-[E2 ubiquitin-conjugating enzyme]-L-cysteine + [acceptor protein]-L-lysine = [E2 ubiquitin-conjugating enzyme]-L-cysteine + N(6)-ubiquitinyl-[acceptor protein]-L-lysine.. Functionally, effector proteins function to alter host cell physiology and promote bacterial survival in host tissues. This protein is an E3 ubiquitin ligase that interferes with host's ubiquitination pathway. For instance, prevents host innate immune response by ubiquitinating and thus sending to degradation host E3 ubiquitin ligases TRIM56 and TRIM65. The chain is E3 ubiquitin-protein ligase SopA (sopA) from Salmonella typhimurium (strain D23580).